A 275-amino-acid chain; its full sequence is Trans-aconitate 2-methyltransferase (275 aa).

This sequence belongs to the methyltransferase superfamily. Tam family.

It is found in the cytoplasm. It catalyses the reaction trans-aconitate + S-adenosyl-L-methionine = (E)-3-(methoxycarbonyl)pent-2-enedioate + S-adenosyl-L-homocysteine. In terms of biological role, catalyzes the S-adenosylmethionine monomethyl esterification of trans-aconitate. In Pseudomonas paraeruginosa (strain DSM 24068 / PA7) (Pseudomonas aeruginosa (strain PA7)), this protein is Trans-aconitate 2-methyltransferase.